Consider the following 172-residue polypeptide: Dual-action ribosomal maturation protein DarP (172 aa).

Belongs to the DarP family.

Its subcellular location is the cytoplasm. Member of a network of 50S ribosomal subunit biogenesis factors which assembles along the 30S-50S interface, preventing incorrect 23S rRNA structures from forming. Promotes peptidyl transferase center (PTC) maturation. This is Dual-action ribosomal maturation protein DarP from Azotobacter vinelandii (strain DJ / ATCC BAA-1303).